Consider the following 615-residue polypeptide: Probable ATP-citrate synthase subunit 1 (615 aa).

Residues 221 to 241 (LIRF…EVGG) and 272 to 298 (FKTE…KNQA) contribute to the ATP site. Residue Glu-238 coordinates Mg(2+). His-280 serves as the catalytic Tele-phosphohistidine intermediate. 299-309 (MREAGIYVPET) is a binding site for CoA. The residue at position 359 (Ser-359) is a Phosphoserine.

This sequence belongs to the succinate/malate CoA ligase alpha subunit family. Composed of two subunits.

The protein resides in the cytoplasm. The catalysed reaction is oxaloacetate + acetyl-CoA + ADP + phosphate = citrate + ATP + CoA. In terms of biological role, catalyzes the formation of cytosolic acetyl-CoA, which is mainly used for the biosynthesis of fatty acids and sterols. The sequence is that of Probable ATP-citrate synthase subunit 1 from Schizosaccharomyces pombe (strain 972 / ATCC 24843) (Fission yeast).